A 174-amino-acid chain; its full sequence is Small ribosomal subunit protein uS5 (174 aa).

Residues 18-81 (WQERVIQIRR…ADGKKHLIDI (64 aa)) enclose the S5 DRBM domain.

The protein belongs to the universal ribosomal protein uS5 family. As to quaternary structure, part of the 30S ribosomal subunit. Contacts proteins S4 and S8.

Functionally, with S4 and S12 plays an important role in translational accuracy. In terms of biological role, located at the back of the 30S subunit body where it stabilizes the conformation of the head with respect to the body. This is Small ribosomal subunit protein uS5 from Trichormus variabilis (strain ATCC 29413 / PCC 7937) (Anabaena variabilis).